We begin with the raw amino-acid sequence, 120 residues long: Glycophorin-A (120 aa).

At Gln-1 the chain carries Pyrrolidone carboxylic acid. A disordered region spans residues 1-40 (QTIATGSPPIAGTSDLSTITSAATPTFTTEQDGREQGDGL). Residues Thr-2 and Thr-5 are each glycosylated (O-linked (GalNAc...) threonine). O-linked (GalNAc...) serine glycosylation occurs at Ser-7. An O-linked (GalNAc...) threonine glycan is attached at Thr-13. A glycan (O-linked (GalNAc...) serine) is linked at Ser-17. The span at 17-29 (STITSAATPTFTT) shows a compositional bias: low complexity. Residues Thr-18 and Thr-20 are each glycosylated (O-linked (GalNAc...) threonine). Ser-21 is a glycosylation site (O-linked (GalNAc...) serine). Residues Thr-24 and Thr-28 are each glycosylated (O-linked (GalNAc...) threonine). Residues 50 to 72 (VITVIILGVMAGIIGIILLLAYV) form a helical membrane-spanning segment. The disordered stretch occupies residues 78-120 (KRPPADVPPPASTVPSADAPPPVSEDDETSLTSVETDYPGDSQ). Positions 82–100 (ADVPPPASTVPSADAPPPV) are enriched in pro residues. The span at 107-120 (SLTSVETDYPGDSQ) shows a compositional bias: polar residues. Ser-119 is subject to Phosphoserine.

The protein belongs to the glycophorin-A family. As to quaternary structure, homodimer.

It is found in the membrane. Its function is as follows. Glycophorin A is the major intrinsic membrane sialoglycoprotein of the erythrocyte. Appears to be important for the function of SLC4A1 and is required for high activity of SLC4A1. May be involved in translocation of SLC4A1 to the plasma membrane. In Equus caballus (Horse), this protein is Glycophorin-A.